We begin with the raw amino-acid sequence, 471 residues long: Phosphoglycerate kinase (471 aa).

Substrate is bound by residues aspartate 24–asparagine 26, arginine 41, histidine 64–arginine 67, arginine 127, and arginine 169. Residues lysine 220, glycine 307, glutamate 338, and glycine 368–serine 371 contribute to the ATP site. Residues lysine 417–lysine 471 form a disordered region. Low complexity predominate over residues threonine 439–lysine 455.

Belongs to the phosphoglycerate kinase family. Monomer.

Its subcellular location is the cytoplasm. It catalyses the reaction (2R)-3-phosphoglycerate + ATP = (2R)-3-phospho-glyceroyl phosphate + ADP. Its pathway is carbohydrate degradation; glycolysis; pyruvate from D-glyceraldehyde 3-phosphate: step 2/5. This is Phosphoglycerate kinase from Malacoplasma penetrans (strain HF-2) (Mycoplasma penetrans).